The primary structure comprises 176 residues: Large ribosomal subunit protein eL20 (176 aa).

Lys11 participates in a covalent cross-link: Glycyl lysine isopeptide (Lys-Gly) (interchain with G-Cter in SUMO2). Tyr63 is subject to Phosphotyrosine. Ser71 carries the post-translational modification Phosphoserine. N6-succinyllysine is present on Lys76. The residue at position 123 (Ser123) is a Phosphoserine. Glycyl lysine isopeptide (Lys-Gly) (interchain with G-Cter in SUMO2) cross-links involve residues Lys128 and Lys170.

The protein belongs to the eukaryotic ribosomal protein eL20 family. Component of the large ribosomal subunit. Binds IPO9 with high affinity.

The protein resides in the cytoplasm. Functionally, component of the large ribosomal subunit. The ribosome is a large ribonucleoprotein complex responsible for the synthesis of proteins in the cell. In Bos taurus (Bovine), this protein is Large ribosomal subunit protein eL20 (RPL18A).